Reading from the N-terminus, the 347-residue chain is Isopentenyl-diphosphate delta-isomerase (347 aa).

A substrate-binding site is contributed by 9-10 (RK). FMN-binding positions include S67, 68–70 (SMT), S98, and N127. 98–100 (SQR) lines the substrate pocket. A substrate-binding site is contributed by Q162. E163 is a binding site for Mg(2+). FMN contacts are provided by residues K194, T224, 274-276 (GIR), and 295-296 (AA).

The protein belongs to the IPP isomerase type 2 family. Homooctamer. Dimer of tetramers. FMN is required as a cofactor. Requires NADPH as cofactor. It depends on Mg(2+) as a cofactor.

The protein localises to the cytoplasm. It catalyses the reaction isopentenyl diphosphate = dimethylallyl diphosphate. Involved in the biosynthesis of isoprenoids. Catalyzes the 1,3-allylic rearrangement of the homoallylic substrate isopentenyl (IPP) to its allylic isomer, dimethylallyl diphosphate (DMAPP). The sequence is that of Isopentenyl-diphosphate delta-isomerase from Cronobacter sakazakii (strain ATCC BAA-894) (Enterobacter sakazakii).